A 327-amino-acid chain; its full sequence is Short chain isoprenyl diphosphate synthase (327 aa).

Isopentenyl diphosphate is bound by residues Lys-48, Arg-51, and His-80. Residues Asp-87 and Asp-91 each coordinate Mg(2+). Arg-96 serves as a coordination point for an all-trans-polyprenyl diphosphate. Arg-97 contacts isopentenyl diphosphate. An all-trans-polyprenyl diphosphate is bound by residues Lys-176, Thr-177, Gln-214, Lys-231, and Lys-241.

This sequence belongs to the FPP/GGPP synthase family. In terms of assembly, homodimer. Mg(2+) is required as a cofactor.

The protein resides in the cytoplasm. In Methanocaldococcus jannaschii (strain ATCC 43067 / DSM 2661 / JAL-1 / JCM 10045 / NBRC 100440) (Methanococcus jannaschii), this protein is Short chain isoprenyl diphosphate synthase (idsA).